A 41-amino-acid chain; its full sequence is Histone H3.2 (41 aa).

Residues 1 to 41 form a disordered region; sequence MARTKQTARKSTGAKAPRKQLASKAARKSAPATGGIKKPHR.

The protein belongs to the histone H3 family. As to quaternary structure, the nucleosome is a histone octamer containing two molecules each of H2A, H2B, H3 and H4 assembled in one H3-H4 heterotetramer and two H2A-H2B heterodimers. The octamer wraps approximately 147 bp of DNA.

It is found in the nucleus. The protein resides in the chromosome. Core component of nucleosome. Nucleosomes wrap and compact DNA into chromatin, limiting DNA accessibility to the cellular machineries which require DNA as a template. Histones thereby play a central role in transcription regulation, DNA repair, DNA replication and chromosomal stability. DNA accessibility is regulated via a complex set of post-translational modifications of histones, also called histone code, and nucleosome remodeling. The polypeptide is Histone H3.2 (Tetrahymena australis).